The chain runs to 968 residues: RNA polymerase-associated protein RapA (968 aa).

Residues 164–334 (DVGRRHAPRV…FARLRLLDPN (171 aa)) form the Helicase ATP-binding domain. An ATP-binding site is contributed by 177–184 (DEVGLGKT). Residues 280-283 (DEAH) carry the DEAH box motif. Residues 490 to 662 (RVEWLMGYLT…YLASPDQTEG (173 aa)) form the Helicase C-terminal domain.

Belongs to the SNF2/RAD54 helicase family. RapA subfamily. Interacts with the RNAP. Has a higher affinity for the core RNAP than for the holoenzyme. Its ATPase activity is stimulated by binding to RNAP.

Functionally, transcription regulator that activates transcription by stimulating RNA polymerase (RNAP) recycling in case of stress conditions such as supercoiled DNA or high salt concentrations. Probably acts by releasing the RNAP, when it is trapped or immobilized on tightly supercoiled DNA. Does not activate transcription on linear DNA. Probably not involved in DNA repair. This chain is RNA polymerase-associated protein RapA, found in Escherichia coli O1:K1 / APEC.